The primary structure comprises 337 residues: 25S rRNA (adenine(2142)-N(1))-methyltransferase (337 aa).

Positions 180 and 201 each coordinate S-adenosyl-L-methionine.

This sequence belongs to the BMT2 family.

It localises to the nucleus. It is found in the nucleolus. It carries out the reaction adenosine(2142) in 25S rRNA + S-adenosyl-L-methionine = N(1)-methyladenosine(2142) in 25S rRNA + S-adenosyl-L-homocysteine + H(+). Functionally, S-adenosyl-L-methionine-dependent methyltransferase that specifically methylates the N(1) position of adenine 2142 in 25S rRNA. N(1)-methyladenine(2142) in 25S rRNA is present in helix 65, a region that accounts for most of the intersubunit surface of the large subunit. This is 25S rRNA (adenine(2142)-N(1))-methyltransferase from Saccharomyces cerevisiae (strain ATCC 204508 / S288c) (Baker's yeast).